The sequence spans 413 residues: 2,3-diketo-5-methylthiopentyl-1-phosphate enolase (413 aa).

Lys-98 serves as the catalytic Proton acceptor. Residues Lys-147, 173 to 176, His-264, Gly-337, and 359 to 360 contribute to the substrate site; these read KDDE and GG. Residues Lys-173, Asp-175, and Glu-176 each coordinate Mg(2+). Residue Lys-173 is modified to N6-carboxylysine.

This sequence belongs to the RuBisCO large chain family. Type IV subfamily. As to quaternary structure, homodimer. The cofactor is Mg(2+).

The enzyme catalyses 5-methylsulfanyl-2,3-dioxopentyl phosphate = 2-hydroxy-5-methylsulfanyl-3-oxopent-1-enyl phosphate. It functions in the pathway amino-acid biosynthesis; L-methionine biosynthesis via salvage pathway; L-methionine from S-methyl-5-thio-alpha-D-ribose 1-phosphate: step 3/6. In terms of biological role, catalyzes the enolization of 2,3-diketo-5-methylthiopentyl-1-phosphate (DK-MTP-1-P) into 2-hydroxy-3-keto-5-methylthiopentenyl-1-phosphate (HK-MTPenyl-1-P). The chain is 2,3-diketo-5-methylthiopentyl-1-phosphate enolase from Geobacillus thermodenitrificans (strain NG80-2).